The following is a 281-amino-acid chain: Glutamate racemase (281 aa).

Residues 13–14 (DS) and 45–46 (YG) contribute to the substrate site. The active-site Proton donor/acceptor is the Cys76. Residue 77–78 (NT) participates in substrate binding. Cys185 (proton donor/acceptor) is an active-site residue. 186 to 187 (TH) lines the substrate pocket.

It belongs to the aspartate/glutamate racemases family.

The catalysed reaction is L-glutamate = D-glutamate. It participates in cell wall biogenesis; peptidoglycan biosynthesis. In terms of biological role, provides the (R)-glutamate required for cell wall biosynthesis. The protein is Glutamate racemase of Rippkaea orientalis (strain PCC 8801 / RF-1) (Cyanothece sp. (strain PCC 8801)).